The chain runs to 629 residues: MVALSTLSGLSALPFLFSLVQNVYGVSLEVSTEKGNSSSPILYGFMFEDINHSGDGGIYGQLLRNNGLQGSKPGLTAWAAVGDATIAVDAQNPLTEAIPHSLKLDVKQGASGAVGFTNEGYWGVPVDGSEFLNTFWIKGNFSGDITVRLVGNNTGTEYGSTKISQSSNSSNFTKVLAKIPTKKAPDGAVLYELTVDGASVGGSSLNFGLFELFPQTYKSRSNGLKPQVAQPLADMKGSFLRFPGGNNLEGASEARRWKWNETIGPVENRPGRQGDWSYYNTDGLGLDEYFYWCEDMGLTPVLGVWAGFALESGGNTPITGDALKPYIDDVLNELEYVLGDASTKYGSLRASYGRKEPWKLTMVEIGNEDMLGGGCESYVERFTAFSDAIHAAYPDLTIIASTDQSSCLPSKLPEGAWVDYHNYNTADNLVKQFSQFDNKDRSVPYFIGEYSCQQDNAWPFMQGSVAEAVYMIGIERNSDVVKMAAYAPLLQLVNSTQWTPNLIAFTQNPSTVIETTSYYVQQMFSVNRGDTIHNVTSDSAFGPVYWVASSADDKYYVKLANYGADTQEITVTISGKTGGKLTVLADSDPKAFNSDTQTLVTPSESDMKATNGKFTFTLPAWSVGVLAAH.

Residues 1-25 form the signal peptide; that stretch reads MVALSTLSGLSALPFLFSLVQNVYG. 9 N-linked (GlcNAc...) asparagine glycosylation sites follow: Asn36, Asn51, Asn140, Asn152, Asn168, Asn171, Asn260, Asn494, and Asn534.

The protein belongs to the glycosyl hydrolase 51 family.

Its subcellular location is the secreted. It catalyses the reaction Hydrolysis of terminal non-reducing alpha-L-arabinofuranoside residues in alpha-L-arabinosides.. Its pathway is glycan metabolism; L-arabinan degradation. In terms of biological role, alpha-L-arabinofuranosidase involved in the degradation of arabinoxylan, a major component of plant hemicellulose. Acts only on small linear 1,5-alpha-linked L-arabinofuranosyl oligosaccharides. The polypeptide is Probable alpha-L-arabinofuranosidase A (abfA) (Aspergillus oryzae (strain ATCC 42149 / RIB 40) (Yellow koji mold)).